An 81-amino-acid chain; its full sequence is Costars family protein ABRACL (81 aa).

An N-acetylmethionine modification is found at methionine 1.

Belongs to the costars family.

In Homo sapiens (Human), this protein is Costars family protein ABRACL (ABRACL).